The primary structure comprises 444 residues: Docking protein 3 (444 aa).

A PH domain is found at 7–123 (PVKDGLLYQQ…WMDPICQLAF (117 aa)). A disordered region spans residues 47–66 (DVRDGGLGPGGDRPAGPGRR). Position 138 is a phosphoserine (serine 138). Residues 157-261 (EVAEFPVVVQ…ARQRERLPEL (105 aa)) enclose the IRS-type PTB domain. Serine 274, serine 308, and serine 314 each carry phosphoserine. A Phosphotyrosine modification is found at tyrosine 325. Residues 354 to 390 (GLSNGGPEAQEGPPGGRSPLGSPIYHNSEELSWPGSA) form a disordered region. The segment covering 358–376 (GGPEAQEGPPGGRSPLGSP) has biased composition (low complexity). Serine 371 carries the post-translational modification Phosphoserine.

Belongs to the DOK family. Type A subfamily. As to quaternary structure, on tyrosine phosphorylation, interacts with CSK and INPP5D/SHIP1 via their SH2 domains. Binds ABL1 through the PTB domain and in a kinase-dependent manner. Does not interact with RasGAP. In terms of processing, constitutively tyrosine-phosphorylated. Post-translationally, on IL2 stimulation, phosphorylated on C-terminal tyrosine residues possibly by Src kinases. Can also be phosphorylated by ABL1 kinase.

It localises to the cytoplasm. The protein resides in the cell membrane. Its function is as follows. DOK proteins are enzymatically inert adaptor or scaffolding proteins. They provide a docking platform for the assembly of multimolecular signaling complexes. DOK3 is a negative regulator of JNK signaling in B-cells through interaction with INPP5D/SHIP1. May modulate ABL1 function. This Rattus norvegicus (Rat) protein is Docking protein 3 (Dok3).